A 133-amino-acid polypeptide reads, in one-letter code: Small ribosomal subunit protein mS23 (133 aa).

The protein belongs to the mitochondrion-specific ribosomal protein mS23 family. As to quaternary structure, component of the mitochondrial ribosome small subunit (28S) which comprises a 12S rRNA and about 30 distinct proteins.

The protein localises to the mitochondrion. This is Small ribosomal subunit protein mS23 (mrps-23) from Caenorhabditis elegans.